Consider the following 265-residue polypeptide: MGSFLFLIVVIFLFSSSVNACDRCLHRSKAAYFSSASALSSGACAYGSMATSFFAGHIAAAIPSIYKDGAGCGACFQVRCKNPKLCSTKGTIVMITDLNKSNQTDLVLSSRAFRAMAKPIVGADKDLLKQGIVDIEYQRVPCDYGNKNMNVRVEEASKKPNYLEIKLLYQGGQTEVVSIDIAQVGSSPNWGYMTRSHGAVWVTDKVPTGAIQFRFVVTGGYDGKMIWSQSVLPSNWEAGKIYDAGVQITDIAQEGCDPCDAHIWN.

Residues 1–20 (MGSFLFLIVVIFLFSSSVNA) form the signal peptide. The 107-residue stretch at 41 to 147 (SGACAYGSMA…QRVPCDYGNK (107 aa)) folds into the Expansin-like EG45 domain. Residues 42 to 62 (GACAYGSMATSFFAGHIAAAI) traverse the membrane as a helical segment. 2 N-linked (GlcNAc...) asparagine glycosylation sites follow: Asn-99 and Asn-102. The region spanning 161-244 (NYLEIKLLYQ…NWEAGKIYDA (84 aa)) is the Expansin-like CBD domain.

Belongs to the expansin family. Expansin-like A subfamily.

Its subcellular location is the membrane. The protein is Expansin-like A1 (EXLA1) of Arabidopsis thaliana (Mouse-ear cress).